The chain runs to 529 residues: Bifunctional purine biosynthesis protein PurH (529 aa).

Positions 2-148 constitute an MGS-like domain; it reads QHLRPIRRAL…KNHKDVTIVV (147 aa).

Belongs to the PurH family.

It catalyses the reaction (6R)-10-formyltetrahydrofolate + 5-amino-1-(5-phospho-beta-D-ribosyl)imidazole-4-carboxamide = 5-formamido-1-(5-phospho-D-ribosyl)imidazole-4-carboxamide + (6S)-5,6,7,8-tetrahydrofolate. It carries out the reaction IMP + H2O = 5-formamido-1-(5-phospho-D-ribosyl)imidazole-4-carboxamide. It functions in the pathway purine metabolism; IMP biosynthesis via de novo pathway; 5-formamido-1-(5-phospho-D-ribosyl)imidazole-4-carboxamide from 5-amino-1-(5-phospho-D-ribosyl)imidazole-4-carboxamide (10-formyl THF route): step 1/1. The protein operates within purine metabolism; IMP biosynthesis via de novo pathway; IMP from 5-formamido-1-(5-phospho-D-ribosyl)imidazole-4-carboxamide: step 1/1. The chain is Bifunctional purine biosynthesis protein PurH from Proteus mirabilis (strain HI4320).